Reading from the N-terminus, the 126-residue chain is MSHNQQAAQPSSSRTQVIEREASPGVLTVRGAAEDEDSNVRFTEEVVDNEHMDKKKSKICCIYHPPAEFGESSEEESCGSDDSGPESDEGDIPNARKPKKKNKGKCGGHRDPSPNAYERKPRPKKN.

The span at 1 to 16 (MSHNQQAAQPSSSRTQ) shows a compositional bias: polar residues. The tract at residues 1 to 126 (MSHNQQAAQP…YERKPRPKKN (126 aa)) is disordered. Basic and acidic residues predominate over residues 38–53 (SNVRFTEEVVDNEHMD). Acidic residues predominate over residues 71–91 (ESSEEESCGSDDSGPESDEGD). Basic residues predominate over residues 96 to 107 (RKPKKKNKGKCG). Positions 108–120 (GHRDPSPNAYERK) are enriched in basic and acidic residues.

This sequence belongs to the YPI1 family.

It localises to the nucleus. Regulator of type 1 phosphatases which maintains protein phosphatase activity under strict control. The polypeptide is Type 1 phosphatases regulator YPI1 (YPI1) (Yarrowia lipolytica (strain CLIB 122 / E 150) (Yeast)).